We begin with the raw amino-acid sequence, 146 residues long: Hemoglobin subunit beta (146 aa).

At Val-1 the chain carries N-acetylvaline. One can recognise a Globin domain in the interval 2–146 (ELTAEEKAAV…VANALAHKYH (145 aa)). A Phosphoserine modification is found at Ser-44. Lys-59 is subject to N6-acetyllysine. His-63 contacts heme b. Position 82 is an N6-acetyllysine (Lys-82). Residue His-92 participates in heme b binding. Cys-93 carries the S-nitrosocysteine modification. The residue at position 144 (Lys-144) is an N6-acetyllysine.

It belongs to the globin family. Heterotetramer of two alpha chains and two beta chains. In terms of tissue distribution, red blood cells.

Involved in oxygen transport from the lung to the various peripheral tissues. This is Hemoglobin subunit beta (HBB) from Ceratotherium simum (White rhinoceros).